A 261-amino-acid polypeptide reads, in one-letter code: Succinate dehydrogenase [ubiquinone] iron-sulfur subunit, mitochondrial (261 aa).

Residues 31–122 form the 2Fe-2S ferredoxin-type domain; it reads FKIYRWNPDT…DVKIYPLPHM (92 aa). [2Fe-2S] cluster-binding residues include Cys82, Cys87, Cys90, and Cys102. A 4Fe-4S ferredoxin-type domain is found at 164–194; the sequence is DRKKLDGLYECILCACCSTACPSYWWNNEQY. Cys174, Cys177, and Cys180 together coordinate [4Fe-4S] cluster. A [3Fe-4S] cluster-binding site is contributed by Cys184. Trp189 provides a ligand contact to a ubiquinone. Residues Cys231 and Cys237 each coordinate [3Fe-4S] cluster. Position 241 (Cys241) interacts with [4Fe-4S] cluster.

The protein belongs to the succinate dehydrogenase/fumarate reductase iron-sulfur protein family. In terms of assembly, component of complex II composed of four subunits: a flavoprotein (FP), an iron-sulfur protein (IP), and a cytochrome b composed of a large and a small subunit. It depends on [2Fe-2S] cluster as a cofactor. [3Fe-4S] cluster serves as cofactor. [4Fe-4S] cluster is required as a cofactor.

The protein resides in the mitochondrion inner membrane. The enzyme catalyses a quinone + succinate = fumarate + a quinol. It participates in carbohydrate metabolism; tricarboxylic acid cycle; fumarate from succinate (eukaryal route): step 1/1. Functionally, iron-sulfur protein (IP) subunit of succinate dehydrogenase (SDH) that is involved in complex II of the mitochondrial electron transport chain and is responsible for transferring electrons from succinate to ubiquinone (coenzyme Q). The polypeptide is Succinate dehydrogenase [ubiquinone] iron-sulfur subunit, mitochondrial (SDH2) (Eremothecium gossypii (strain ATCC 10895 / CBS 109.51 / FGSC 9923 / NRRL Y-1056) (Yeast)).